The sequence spans 244 residues: Precorrin-6A reductase (244 aa).

This sequence belongs to the precorrin-6x reductase family.

The enzyme catalyses precorrin-6B + NADP(+) = precorrin-6A + NADPH + 2 H(+). It functions in the pathway cofactor biosynthesis; adenosylcobalamin biosynthesis; cob(II)yrinate a,c-diamide from precorrin-2 (aerobic route): step 6/10. Its function is as follows. Catalyzes the reduction of the macrocycle of precorrin-6X into precorrin-6Y. In Mycobacterium tuberculosis (strain CDC 1551 / Oshkosh), this protein is Precorrin-6A reductase (cobK).